The primary structure comprises 326 residues: L-lactate dehydrogenase (326 aa).

NAD(+)-binding positions include Val26, Asp47, Lys52, Tyr78, and 92 to 93 (GA). Substrate is bound by residues Gln95 and Arg101. Residues Thr114, 131 to 133 (ASN), and Ser156 contribute to the NAD(+) site. Position 133-136 (133-136 (NPVD)) interacts with substrate. 161–164 (DTAR) provides a ligand contact to substrate. Arg166 and His181 together coordinate beta-D-fructose 1,6-bisphosphate. His188 serves as the catalytic Proton acceptor. Tyr233 is subject to Phosphotyrosine. A substrate-binding site is contributed by Thr242.

It belongs to the LDH/MDH superfamily. LDH family. In terms of assembly, homotetramer.

It is found in the cytoplasm. It carries out the reaction (S)-lactate + NAD(+) = pyruvate + NADH + H(+). It participates in fermentation; pyruvate fermentation to lactate; (S)-lactate from pyruvate: step 1/1. With respect to regulation, allosterically activated by fructose 1,6-bisphosphate (FBP). Its function is as follows. Catalyzes the conversion of lactate to pyruvate. This is L-lactate dehydrogenase from Corynebacterium jeikeium (strain K411).